Consider the following 278-residue polypeptide: Pyrroline-5-carboxylate reductase (278 aa).

This sequence belongs to the pyrroline-5-carboxylate reductase family.

The protein resides in the cytoplasm. The catalysed reaction is L-proline + NADP(+) = (S)-1-pyrroline-5-carboxylate + NADPH + 2 H(+). It carries out the reaction L-proline + NAD(+) = (S)-1-pyrroline-5-carboxylate + NADH + 2 H(+). It functions in the pathway amino-acid biosynthesis; L-proline biosynthesis; L-proline from L-glutamate 5-semialdehyde: step 1/1. The polypeptide is Pyrroline-5-carboxylate reductase (Actinidia chinensis var. chinensis (Chinese soft-hair kiwi)).